Here is a 332-residue protein sequence, read N- to C-terminus: UPF0194 membrane protein YbhG (332 aa).

The first 16 residues, 1-16 (MMKKPVVIGLAVVVLA), serve as a signal peptide directing secretion. A coiled-coil region spans residues 108–209 (EEIAQAAAAV…LNLQDSTLIA (102 aa)).

This sequence belongs to the UPF0194 family.

The protein localises to the periplasm. The sequence is that of UPF0194 membrane protein YbhG from Escherichia coli O127:H6 (strain E2348/69 / EPEC).